A 342-amino-acid chain; its full sequence is Glycerol-1-phosphate dehydrogenase [NAD(P)+] (342 aa).

NAD(+) is bound by residues 84–88 (GRPLD) and 106–109 (TSAS). Asp-111 lines the substrate pocket. Ser-115 lines the NAD(+) pocket. Asp-160 contacts substrate. 2 residues coordinate Zn(2+): Asp-160 and His-241. Substrate is bound at residue His-245. Position 260 (His-260) interacts with Zn(2+).

The protein belongs to the glycerol-1-phosphate dehydrogenase family. In terms of assembly, homodimer. It depends on Zn(2+) as a cofactor.

It is found in the cytoplasm. It carries out the reaction sn-glycerol 1-phosphate + NAD(+) = dihydroxyacetone phosphate + NADH + H(+). The enzyme catalyses sn-glycerol 1-phosphate + NADP(+) = dihydroxyacetone phosphate + NADPH + H(+). Its pathway is membrane lipid metabolism; glycerophospholipid metabolism. Catalyzes the NAD(P)H-dependent reduction of dihydroxyacetonephosphate (DHAP or glycerone phosphate) to glycerol 1-phosphate (G1P). The G1P thus generated is used as the glycerophosphate backbone of phospholipids in the cellular membranes of Archaea. The polypeptide is Glycerol-1-phosphate dehydrogenase [NAD(P)+] (Pyrobaculum neutrophilum (strain DSM 2338 / JCM 9278 / NBRC 100436 / V24Sta) (Thermoproteus neutrophilus)).